The sequence spans 745 residues: uncharacterized protein (745 aa).

An HTH araC/xylS-type domain is found at 158 to 256 (NQVCDYIELH…HQTPKQYRGD (99 aa)). DNA-binding regions (H-T-H motif) lie at residues 175 to 196 (SELSEYVGWSESHLSKKFTESL) and 223 to 246 (ITDIALQNGFSSAASFARTFKHFT).

This is an uncharacterized protein from Staphylococcus aureus (strain MW2).